The primary structure comprises 649 residues: MASNMDREMILADFQACTGIENIDEAITLLEQNNWDLVAAINGVIPQENGILQSDFGGETMPGPTFDPASPPAPAPAPSSSAFRPVMPSRQIVERQPRMLDFRVEYRDRNVDVVLEDSCTVGEIKQILENELQIPVPKMLLKGWKTGDVEDSTVLKSLHLPKNNSLYVLTPDLPPPSSSSHAGALQESLNQNFMLIITHREVQREYNLNFSGSSTVQEVKRNVYDLTSIPVRHQLWEGWPASATDDSMCLAESGLSYPCHRLTVGRRTSPVQTREQSEEQSTVVHMVSDSDGDDFEDASEFGVVDGEVFGMASSTMRKSPMMPENAENEGDALLQFTAEFSSRYGDCHPVFFIGSLEAAFQEAFYVKARDRKLLAIYLHHDESVLTNVFCSQMLCAESIVSYLSQNFITWAWDLTKDANRARFLTMCNRHFGSVIAQTIRTQKTDQFPLFLIIMGKRSSNEVLNVIQGNTTVDELMMRLMAAMEIFSAQQQEDIKDEDEREARENVKREQDEAYRLSLEADRAKREAHEREMAEQFRLEQIRKEQEEEREAIRLSLEQALPPEPEEENAEPVSKLRIRTPSGEFLERRFLASNKLQIVFDFVASKGFPWDEFKLLSTFPRRDVTQLDPNKSLLEVNLFPQETLFLLAKE.

The 57-residue stretch at 1 to 57 (MASNMDREMILADFQACTGIENIDEAITLLEQNNWDLVAAINGVIPQENGILQSDFG) folds into the UBA domain. Residues 55–84 (DFGGETMPGPTFDPASPPAPAPAPSSSAFR) form a disordered region. Ser319 carries the post-translational modification Phosphoserine. The 78-residue stretch at 568–645 (NAEPVSKLRI…NLFPQETLFL (78 aa)) folds into the UBX domain. Thr579 bears the Phosphothreonine mark. The residue at position 581 (Ser581) is a Phosphoserine.

As to quaternary structure, interacts with CDT1 and ATPase VCP/p97. Interacts (via UBA domain) with FAS (via death domain). Interacts (via UBA domain) with NLRP12 (via DAPIN/PYRIN domain). As to expression, central nervous system.

The protein resides in the nucleus. In terms of biological role, ubiquitin-binding protein. Required for the progression of DNA replication forks by targeting DNA replication licensing factor CDT1 for degradation. Potentiates but cannot initiate FAS-induced apoptosis. This Rattus norvegicus (Rat) protein is FAS-associated factor 1 (Faf1).